A 305-amino-acid polypeptide reads, in one-letter code: MLRIFQGRPAVTIAAVLVAASVAGCAGKAKKPTLVYEERPVELLYSTGADRLDRGNWNEAVDYFREVERQHPYSEWSRRSILMTGYAHYMGNQYAEAIGDADRFISLYPGNPSAQYAFYLKAICYFEQIVDVNRDQAATEQALAALRDVVQRYPNTEYATDARLKIDMVNDQLAGKEMAIGRWYLKNGQTLAAIGRFKAVIERHQTTSHTPEALFRLVEAYLTIGLNEEAKRNGAVLGYNFPGDRWYVDAYRLLNDNGLRPAVEPLKAGAKRNALERILSKDKEATLAPPGERKAKKGLLGPLGM.

The signal sequence occupies residues 1 to 24 (MLRIFQGRPAVTIAAVLVAASVAG). The N-palmitoyl cysteine moiety is linked to residue Cys-25. Cys-25 carries S-diacylglycerol cysteine lipidation. TPR repeat units follow at residues 41-74 (VELLYSTGADRLDRGNWNEAVDYFREVERQHPYS), 78-111 (RRSILMTGYAHYMGNQYAEAIGDADRFISLYPGN), 113-136 (SAQYAFYLKAICYFEQIVDVNRDQ), and 174-207 (AGKEMAIGRWYLKNGQTLAAIGRFKAVIERHQTT).

It belongs to the BamD family. Part of the Bam complex.

It is found in the cell outer membrane. In terms of biological role, part of the outer membrane protein assembly complex, which is involved in assembly and insertion of beta-barrel proteins into the outer membrane. The chain is Outer membrane protein assembly factor BamD from Caulobacter vibrioides (strain ATCC 19089 / CIP 103742 / CB 15) (Caulobacter crescentus).